A 311-amino-acid polypeptide reads, in one-letter code: Probable manganese-dependent inorganic pyrophosphatase (311 aa).

Mn(2+) contacts are provided by H9, D13, D15, D77, H99, and D151.

The protein belongs to the PPase class C family. Requires Mn(2+) as cofactor.

It localises to the cytoplasm. It catalyses the reaction diphosphate + H2O = 2 phosphate + H(+). The polypeptide is Probable manganese-dependent inorganic pyrophosphatase (Streptococcus pyogenes serotype M49 (strain NZ131)).